The sequence spans 266 residues: Putative carbamate hydrolase RutD (266 aa).

The protein belongs to the AB hydrolase superfamily. Hydrolase RutD family.

The catalysed reaction is carbamate + 2 H(+) = NH4(+) + CO2. In terms of biological role, involved in pyrimidine catabolism. May facilitate the hydrolysis of carbamate, a reaction that can also occur spontaneously. This chain is Putative carbamate hydrolase RutD, found in Escherichia coli O7:K1 (strain IAI39 / ExPEC).